Here is a 66-residue protein sequence, read N- to C-terminus: Large ribosomal subunit protein bL35 (66 aa).

This sequence belongs to the bacterial ribosomal protein bL35 family.

The polypeptide is Large ribosomal subunit protein bL35 (Synechococcus sp. (strain JA-2-3B'a(2-13)) (Cyanobacteria bacterium Yellowstone B-Prime)).